The chain runs to 389 residues: Phospho-N-acetylmuramoyl-pentapeptide-transferase (389 aa).

Helical transmembrane passes span 25 to 45, 74 to 94, 97 to 117, 134 to 154, 167 to 187, 190 to 210, 222 to 242, 259 to 279, 286 to 306, 311 to 331, and 366 to 386; these read RAVM…PWVI, MGGV…CDWG, FIWV…VDDY, FFWQ…SVSE, WIEG…VPFF, VSYP…IVGS, GLVI…AYVM, AGEL…FLWF, VFMG…VAVI, IVLF…MLQV, and QVTV…LSSL.

The protein belongs to the glycosyltransferase 4 family. MraY subfamily. Requires Mg(2+) as cofactor.

The protein resides in the cell inner membrane. The enzyme catalyses UDP-N-acetyl-alpha-D-muramoyl-L-alanyl-gamma-D-glutamyl-meso-2,6-diaminopimeloyl-D-alanyl-D-alanine + di-trans,octa-cis-undecaprenyl phosphate = di-trans,octa-cis-undecaprenyl diphospho-N-acetyl-alpha-D-muramoyl-L-alanyl-D-glutamyl-meso-2,6-diaminopimeloyl-D-alanyl-D-alanine + UMP. It functions in the pathway cell wall biogenesis; peptidoglycan biosynthesis. Its function is as follows. Catalyzes the initial step of the lipid cycle reactions in the biosynthesis of the cell wall peptidoglycan: transfers peptidoglycan precursor phospho-MurNAc-pentapeptide from UDP-MurNAc-pentapeptide onto the lipid carrier undecaprenyl phosphate, yielding undecaprenyl-pyrophosphoryl-MurNAc-pentapeptide, known as lipid I. The sequence is that of Phospho-N-acetylmuramoyl-pentapeptide-transferase from Cupriavidus metallidurans (strain ATCC 43123 / DSM 2839 / NBRC 102507 / CH34) (Ralstonia metallidurans).